The primary structure comprises 353 residues: Protein RecA (353 aa).

Position 75-82 (75-82 (GPESSGKT)) interacts with ATP.

It belongs to the RecA family.

The protein localises to the cytoplasm. Its function is as follows. Can catalyze the hydrolysis of ATP in the presence of single-stranded DNA, the ATP-dependent uptake of single-stranded DNA by duplex DNA, and the ATP-dependent hybridization of homologous single-stranded DNAs. It interacts with LexA causing its activation and leading to its autocatalytic cleavage. This chain is Protein RecA, found in Cupriavidus necator (Alcaligenes eutrophus).